A 303-amino-acid polypeptide reads, in one-letter code: Ribosomal protein uL3 glutamine methyltransferase (303 aa).

The protein belongs to the protein N5-glutamine methyltransferase family. PrmB subfamily.

The catalysed reaction is L-glutaminyl-[ribosomal protein uL3] + S-adenosyl-L-methionine = N(5)-methyl-L-glutaminyl-[ribosomal protein uL3] + S-adenosyl-L-homocysteine + H(+). Its function is as follows. Methylates large ribosomal subunit protein uL3 on a specific glutamine residue. The polypeptide is Ribosomal protein uL3 glutamine methyltransferase (Neisseria meningitidis serogroup B (strain ATCC BAA-335 / MC58)).